Consider the following 247-residue polypeptide: Ribosomal RNA large subunit methyltransferase E (247 aa).

Residues M1 to Y21 form a disordered region. G88, W90, D111, D127, and D151 together coordinate S-adenosyl-L-methionine. Residue K191 is the Proton acceptor of the active site.

Belongs to the class I-like SAM-binding methyltransferase superfamily. RNA methyltransferase RlmE family.

It is found in the cytoplasm. It carries out the reaction uridine(2552) in 23S rRNA + S-adenosyl-L-methionine = 2'-O-methyluridine(2552) in 23S rRNA + S-adenosyl-L-homocysteine + H(+). Its function is as follows. Specifically methylates the uridine in position 2552 of 23S rRNA at the 2'-O position of the ribose in the fully assembled 50S ribosomal subunit. This chain is Ribosomal RNA large subunit methyltransferase E, found in Bartonella henselae (strain ATCC 49882 / DSM 28221 / CCUG 30454 / Houston 1) (Rochalimaea henselae).